A 327-amino-acid chain; its full sequence is MYQSLMTVRETQIAIKEVKTFFEDQLAKRLELFRVSAPLFVTKKSGLNDHLNGVERPIEFDMLHSGEELEIVHSLAKWKRFALHEYGYEAGEGLYTNMNAIRRDEELDATHSIYVDQWDWEKIVQKEWRTIDYLQKTVQTIYGIFKELEGHLFEKYPFLGKYLPEEIIFITSQELEDKYPELTPKDREHAIAKEHGAVFIIGIGDALRSGEKHDGRASDYDDWKLNGDILFWHPVLQASFELSSMGIRVDSKALDEQLTKTGEDFKREYDFHKGILEDVLPLTIGGGIGQSRMCMYFLRKAHIGEVQSSVWPDDLREACKKENIHLF.

It belongs to the class-II aminoacyl-tRNA synthetase family. AsnA subfamily.

Its subcellular location is the cytoplasm. The catalysed reaction is L-aspartate + NH4(+) + ATP = L-asparagine + AMP + diphosphate + H(+). It participates in amino-acid biosynthesis; L-asparagine biosynthesis; L-asparagine from L-aspartate (ammonia route): step 1/1. This chain is Aspartate--ammonia ligase, found in Bacillus mycoides (strain KBAB4) (Bacillus weihenstephanensis).